A 222-amino-acid chain; its full sequence is Uclacyanin-3 (222 aa).

The N-terminal stretch at 1–21 (MGSTVAAALLLFLAAVPAVFA) is a signal peptide. One can recognise a Phytocyanin domain in the interval 22-120 (ATFKVGDISG…GMKLAVPVLA (99 aa)). The Cu cation site is built by His61, Cys102, His107, and Met112. Cys74 and Cys108 are joined by a disulfide. The tract at residues 121-198 (AAPSPSTPSS…APLPPSLSPN (78 aa)) is disordered. Pro residues-rich tracts occupy residues 125–172 (PSTP…PSAS) and 185–195 (TPPPAPLPPSL). Residue Asn198 is the site of GPI-anchor amidated asparagine attachment. Positions 199–222 (AASKGVMSYGIIGVTMILMYAVMT) are cleaved as a propeptide — removed in mature form.

The protein localises to the cell membrane. In terms of biological role, probably acts as an electron carrier involved in oxygen activation and/or lignin formation. This Arabidopsis thaliana (Mouse-ear cress) protein is Uclacyanin-3 (UCC3).